The following is a 668-amino-acid chain: Fructose-1,6-bisphosphatase class 3 (668 aa).

Belongs to the FBPase class 3 family. The cofactor is Mn(2+).

It catalyses the reaction beta-D-fructose 1,6-bisphosphate + H2O = beta-D-fructose 6-phosphate + phosphate. The protein operates within carbohydrate biosynthesis; gluconeogenesis. The sequence is that of Fructose-1,6-bisphosphatase class 3 from Clostridium botulinum (strain Okra / Type B1).